A 1168-amino-acid chain; its full sequence is Pre-mRNA-splicing factor ATP-dependent RNA helicase prp22 (1168 aa).

Disordered stretches follow at residues 77–100 and 144–197; these read KDDIPTDNVNNGSNSVNGASHDLD and TLAK…RSSR. Residues 84–94 show a composition bias toward low complexity; sequence NVNNGSNSVNG. Basic and acidic residues predominate over residues 149 to 173; sequence RRNDRDSRRDERHYLNGIRERRERS. Residues 184–197 show a composition bias toward low complexity; the sequence is TSISGQSHSSRSSR. The region spanning 207-280 is the S1 motif domain; sequence YGIYSGVVSG…SAKRISLSMK (74 aa). The disordered stretch occupies residues 287–314; that stretch reads GEDLNPDQVSRSTKKGSGANAIPLSAQN. Positions 520 to 684 constitute a Helicase ATP-binding domain; the sequence is LEAVSKNQIL…FYKCPIFTIP (165 aa). 533-540 is an ATP binding site; that stretch reads GETGSGKT. Residues 631–634 carry the DEAH box motif; that stretch reads DEAH. One can recognise a Helicase C-terminal domain in the interval 702–882; sequence YLDAALMTVM…HTILMLKAMG (181 aa).

The protein belongs to the DEAD box helicase family. DEAH subfamily. DDX8/PRP22 sub-subfamily. As to quaternary structure, belongs to the 40S cdc5-associated complex (or cwf complex), a spliceosome sub-complex reminiscent of a late-stage spliceosome composed of the U2, U5 and U6 snRNAs and at least brr2, cdc5, cwf2/prp3, cwf3/syf1, cwf4/syf3, cwf5/ecm2, spp42/cwf6, cwf7/spf27, cwf8, cwf9, cwf10, cwf11, cwf12, prp45/cwf13, cwf14, cwf15, cwf16, cwf17, cwf18, cwf19, cwf20, cwf21, cwf22, cwf23, cwf24, cwf25, cwf26, cyp7/cwf27, cwf28, cwf29/ist3, lea1, msl1, prp5/cwf1, prp10, prp12/sap130, prp17, prp22, sap61, sap62, sap114, sap145, slu7, smb1, smd1, smd3, smf1, smg1 and syf2.

The protein localises to the nucleus. The enzyme catalyses ATP + H2O = ADP + phosphate + H(+). Its function is as follows. Acts late in the splicing of pre-mRNA. Required for the splicing of introns with a branch nucleotide to 3'-splice site distance greater or equal to 15. Mediates the release of the spliced mRNA from spliceosomes. The polypeptide is Pre-mRNA-splicing factor ATP-dependent RNA helicase prp22 (prp22) (Schizosaccharomyces pombe (strain 972 / ATCC 24843) (Fission yeast)).